Consider the following 211-residue polypeptide: CASP-like protein 1B1 (211 aa).

The interval 1-29 (MDLERGSKTPPSSAPAAAAATTTTSTCCS) is disordered. Residues 1–55 (MDLERGSKTPPSSAPAAAAATTTTSTCCSNKRPQLRDRLVALQPVVLRAAATLAT) are Cytoplasmic-facing. Residues 9 to 26 (TPPSSAPAAAAATTTTST) are compositionally biased toward low complexity. A helical transmembrane segment spans residues 56–76 (AVAAAVMALNAQSYTAVVAIV). Residues 77 to 94 (GTRPLTQTFTTKFRDTPA) lie on the Extracellular side of the membrane. Residues 95–115 (FVYFVIANAIAAVYNLVMLLF) form a helical membrane-spanning segment. Residues 116-123 (RCLILRRR) are Cytoplasmic-facing. A helical transmembrane segment spans residues 124-144 (MAGLVVHMLDMVIMALLATGA). At 145–176 (ATAAAMAELGKNGNVHARWNPICDRFGSFCSR) the chain is on the extracellular side. A helical membrane pass occupies residues 177 to 197 (GGVALASSFTGVALMLALNLL). Residues 198–211 (SAASNAQCSPGQYE) lie on the Cytoplasmic side of the membrane.

It belongs to the Casparian strip membrane proteins (CASP) family. In terms of assembly, homodimer and heterodimers.

The protein resides in the cell membrane. The protein is CASP-like protein 1B1 of Sorghum bicolor (Sorghum).